The following is a 296-amino-acid chain: Morphine 6-dehydrogenase (296 aa).

13-22 contacts NADP(+); it reads GVKMPALGLG. Tyr-52 acts as the Proton donor in catalysis. Residue His-110 coordinates substrate.

The protein belongs to the aldo/keto reductase family. Monomer.

The catalysed reaction is morphine + NAD(+) = morphinone + NADH + H(+). The enzyme catalyses morphine + NADP(+) = morphinone + NADPH + H(+). It functions in the pathway alkaloid degradation; codeine degradation. Its pathway is alkaloid degradation; morphine degradation. Its function is as follows. Oxidizes only the C-6 hydroxy group of morphine and codeine. The polypeptide is Morphine 6-dehydrogenase (morA) (Pseudomonas putida (Arthrobacter siderocapsulatus)).